A 405-amino-acid chain; its full sequence is Phosphopentomutase (405 aa).

D10, D303, H308, D344, H345, and H356 together coordinate Mn(2+).

It belongs to the phosphopentomutase family. The cofactor is Mn(2+).

It localises to the cytoplasm. The enzyme catalyses 2-deoxy-alpha-D-ribose 1-phosphate = 2-deoxy-D-ribose 5-phosphate. It carries out the reaction alpha-D-ribose 1-phosphate = D-ribose 5-phosphate. It participates in carbohydrate degradation; 2-deoxy-D-ribose 1-phosphate degradation; D-glyceraldehyde 3-phosphate and acetaldehyde from 2-deoxy-alpha-D-ribose 1-phosphate: step 1/2. Functionally, isomerase that catalyzes the conversion of deoxy-ribose 1-phosphate (dRib-1-P) and ribose 1-phosphate (Rib-1-P) to deoxy-ribose 5-phosphate (dRib-5-P) and ribose 5-phosphate (Rib-5-P), respectively. This chain is Phosphopentomutase, found in Shewanella frigidimarina (strain NCIMB 400).